The following is a 369-amino-acid chain: Tsukushi (369 aa).

An N-terminal signal peptide occupies residues 1-19 (MQFLAWFNMLLLLPCFSTT). The LRRNT domain maps to 20–60 (KTCFPGCHCEVESFGLFDSFSLTKVDCSGIGSHIVPVPIPL). 11 LRR repeats span residues 61–81 (DTSYLDLSSNKLETINESMLT), 87–108 (TLVSLDLSYNNIAKISSTTFSR), 111–132 (YLESLDLSHNSLEVLPEDCFSS), 134–155 (PLGDIDLSNNKLLDIALDVFAS), 161–181 (PLNVDLSNNMLSKITRNHEKS), 184–205 (NIQNLNLSGNRLTSVPNLQGIP), 206–226 (LRYLNLDGNPLAKIEKGDFKG), 229–248 (GLIHLSLSGLHDFRELSPYS), 254–276 (ALQVLDLSNNPNLRSLTAEVIFG), 279–300 (SIQELNLSGTGVSSLPKTVLKY), and 303–323 (SLKSITLRKNIQCFKTIKEGQ). Asparagine 76 carries an N-linked (GlcNAc...) asparagine glycan. Asparagine 189 carries an N-linked (GlcNAc...) asparagine glycan. N-linked (GlcNAc...) asparagine glycosylation is present at asparagine 284.

Forms a ternary complex with chordin/CHRD and BMP4. As to quaternary structure, interacts with FZD4 (via FZ domain); competes with WNT2B for binding to FZD4, inhibiting Wnt signaling and repressing peripheral eye development. Interacts with BMP4; shows stronger interaction with BMP4 than isoform 2. Interacts with DVR1/VG1; the interaction is inhibited by BMP4. Interacts with BMP7. In terms of assembly, interacts with FZD4 (via FZ domain); competes with WNT2B for binding to FZD4, inhibiting Wnt signaling and repressing peripheral eye development. Interacts with BMP4; shows weaker interaction with BMP4 than isoform 1. Interacts with DVR1/VG1; the interaction is inhibited by BMP4. Interacts with BMP7. N-glycosylated. During embryonic development, expressed in the middle primitive streak and Hensen's node. Expressed in the peripheral region of the developing eye. Expressed in the presomitic mesoderm during somitogenesis in a NOTCH-dependent manner.

The protein localises to the secreted. Contributes to various developmental events through its interactions with multiple signaling pathways. Dorsalizing factor involved in the induction of Hensen's node by inhibiting bone morphogenetic proteins during gastrulation and by enhancing DVR1/VG1 activity. Wnt signaling inhibitor which competes with WNT2B for binding to Wnt receptor FZD4 and represses WNT2B-dependent development of the peripheral eye. In terms of biological role, shows strong bone morphogenetic protein antagonistic activity. Its function is as follows. Shows weak bone morphogenetic protein antagonistic activity. The polypeptide is Tsukushi (TSKU) (Gallus gallus (Chicken)).